The chain runs to 65 residues: uncharacterized protein (65 aa).

This is an uncharacterized protein from Archaeoglobus fulgidus (strain ATCC 49558 / DSM 4304 / JCM 9628 / NBRC 100126 / VC-16).